The primary structure comprises 124 residues: Large ribosomal subunit protein uL22 (124 aa).

Belongs to the universal ribosomal protein uL22 family. As to quaternary structure, part of the 50S ribosomal subunit.

Its function is as follows. This protein binds specifically to 23S rRNA; its binding is stimulated by other ribosomal proteins, e.g. L4, L17, and L20. It is important during the early stages of 50S assembly. It makes multiple contacts with different domains of the 23S rRNA in the assembled 50S subunit and ribosome. In terms of biological role, the globular domain of the protein is located near the polypeptide exit tunnel on the outside of the subunit, while an extended beta-hairpin is found that lines the wall of the exit tunnel in the center of the 70S ribosome. The chain is Large ribosomal subunit protein uL22 from Macrococcus caseolyticus (strain JCSC5402) (Macrococcoides caseolyticum).